The chain runs to 239 residues: Large ribosomal subunit protein uL2 (239 aa).

Disordered regions lie at residues methionine 1–serine 21 and proline 203–lysine 239. Over residues proline 222–lysine 239 the composition is skewed to basic residues.

This sequence belongs to the universal ribosomal protein uL2 family. As to quaternary structure, part of the 50S ribosomal subunit. Forms a bridge to the 30S subunit in the 70S ribosome.

Its function is as follows. One of the primary rRNA binding proteins. Required for association of the 30S and 50S subunits to form the 70S ribosome, for tRNA binding and peptide bond formation. It has been suggested to have peptidyltransferase activity; this is somewhat controversial. Makes several contacts with the 16S rRNA in the 70S ribosome. The chain is Large ribosomal subunit protein uL2 from Pyrococcus furiosus (strain ATCC 43587 / DSM 3638 / JCM 8422 / Vc1).